We begin with the raw amino-acid sequence, 279 residues long: NAD kinase (279 aa).

Asp57 acts as the Proton acceptor in catalysis. Residues 57–58, 133–134, Arg159, Asp161, and 172–177 each bind NAD(+); these read DG, NE, and TAYNKS.

Belongs to the NAD kinase family. A divalent metal cation is required as a cofactor.

The protein resides in the cytoplasm. It carries out the reaction NAD(+) + ATP = ADP + NADP(+) + H(+). Functionally, involved in the regulation of the intracellular balance of NAD and NADP, and is a key enzyme in the biosynthesis of NADP. Catalyzes specifically the phosphorylation on 2'-hydroxyl of the adenosine moiety of NAD to yield NADP. The chain is NAD kinase from Streptococcus pyogenes serotype M2 (strain MGAS10270).